The sequence spans 162 residues: Allophycocyanin alpha-B chain (162 aa).

Asn71 carries the post-translational modification N4-methylasparagine. Cys81 lines the (2R,3E)-phycocyanobilin pocket.

Belongs to the phycobiliprotein family. Contains one covalently linked phycocyanobilin chromophore.

The protein localises to the plastid. It localises to the cyanelle thylakoid membrane. In terms of biological role, allophycocyanin is a photosynthetic bile pigment-protein complex with maximum absorption at approximately 650 nanometers. This chain is Allophycocyanin alpha-B chain (apcD), found in Cyanophora paradoxa.